A 374-amino-acid chain; its full sequence is Mannitol-1-phosphate 5-dehydrogenase (374 aa).

Residue 3 to 14 (AVHFGAGNIGRG) participates in NAD(+) binding.

Belongs to the mannitol dehydrogenase family.

The enzyme catalyses D-mannitol 1-phosphate + NAD(+) = beta-D-fructose 6-phosphate + NADH + H(+). The protein is Mannitol-1-phosphate 5-dehydrogenase of Shouchella clausii (strain KSM-K16) (Alkalihalobacillus clausii).